Consider the following 539-residue polypeptide: Phosphatidylinositol 4-phosphate 5-kinase type-1 beta (539 aa).

A disordered region spans residues 1–21 (MSSTAENGDAVPGKQNEEKTY). Positions 25–395 (ASSAIKGAIQ…RFLKFMNSRV (371 aa)) constitute a PIPK domain. 3 positions are modified to phosphoserine: serine 445, serine 447, and serine 448.

As to quaternary structure, interacts with RAC1, AJUBA, PLD1, PLD2 and ARF1.

It localises to the cytoplasm. The protein localises to the cytosol. The protein resides in the cell membrane. Its subcellular location is the endomembrane system. The enzyme catalyses a 1,2-diacyl-sn-glycero-3-phospho-(1D-myo-inositol 4-phosphate) + ATP = a 1,2-diacyl-sn-glycero-3-phospho-(1D-myo-inositol-4,5-bisphosphate) + ADP + H(+). It catalyses the reaction 1-octadecanoyl-2-(5Z,8Z,11Z,14Z)-eicosatetraenoyl-sn-glycero-3-phospho-1D-myo-inositol 4-phosphate + ATP = 1-octadecanoyl-2-(5Z,8Z,11Z,14Z)-eicosatetraenoyl-sn-glycero-3-phospho-1D-myo-inositol 4,5-bisphosphate + ADP + H(+). It carries out the reaction 1-octadecanoyl-2-(9Z)-octadecenoyl-sn-glycero-3-phospho-1D-myo-inositol 4-phosphate + ATP = 1-octadecanoyl-2-(9Z)-octadecenoyl-sn-glycero-3-phospho-1D-myo-inositol 4,5-bisphosphate + ADP + H(+). The catalysed reaction is 1-octadecanoyl-2-(9Z)-octadecenoyl-sn-glycero-3-phospho-1D-myo-inositol + ATP = 1-octadecanoyl-2-(9Z)-octadecenoyl-sn-glycero-3-phospho-1D-myo-inositol 5-phosphate + ADP + H(+). The enzyme catalyses 1-octadecanoyl-2-(9Z,12Z)-octadecadienoyl-sn-glycero-3-phospho-1D-myo-inositol + ATP = 1-octadecanoyl-2-(9Z,12Z)-octadecadienoyl-sn-glycero-3-phospho-1D-myo-inositol 5-phosphate + ADP + H(+). It catalyses the reaction 1-octadecanoyl-2-(5Z,8Z,11Z,14Z-eicosatetraenoyl)-sn-glycero-3-phospho-(1D-myo-inositol) + ATP = 1-octadecanoyl-2-(5Z,8Z,11Z,14Z)-eicosatetraenoyl-sn-glycero-3-phospho-1D-myo-inositol 5-phosphate + ADP + H(+). It carries out the reaction 1,2-di-(9Z,12Z)-octadecadienoyl-sn-glycero-3-phospho-1D-myo-inositol + ATP = 1,2-di(9Z,12Z)-octadecadienoyl-sn-glycero-3-phospho-1D-myo-inositol 5-phosphate + ADP + H(+). Catalyzes the phosphorylation of phosphatidylinositol 4-phosphate (PtdIns(4)P/PI4P) to form phosphatidylinositol 4,5-bisphosphate (PtdIns(4,5)P2/PIP2), a lipid second messenger that regulates several cellular processes such as signal transduction, vesicle trafficking, actin cytoskeleton dynamics, cell adhesion, and cell motility. PtdIns(4,5)P2 can directly act as a second messenger or can be utilized as a precursor to generate other second messengers: inositol 1,4,5-trisphosphate (IP3), diacylglycerol (DAG) or phosphatidylinositol-3,4,5-trisphosphate (PtdIns(3,4,5)P3/PIP3). Mediates RAC1-dependent reorganization of actin filaments. Contributes to the activation of phospholipase PLD2. Together with PIP5K1A, is required, after stimulation by G-protein coupled receptors, for the synthesis of IP3 that will induce stable platelet adhesion. The sequence is that of Phosphatidylinositol 4-phosphate 5-kinase type-1 beta from Rattus norvegicus (Rat).